We begin with the raw amino-acid sequence, 199 residues long: NAD(P)H dehydrogenase (quinone) 1 (199 aa).

Positions 4–190 constitute a Flavodoxin-like domain; the sequence is VLVLYYSAYG…EAARFQGAHV (187 aa). FMN contacts are provided by residues 10-15 and 78-80; these read SAYGHI and TRY. Tyr12 serves as a coordination point for NAD(+). Substrate is bound at residue Trp98. Residues 113–119 and His134 contribute to the FMN site; that span reads SSATQHG.

The protein belongs to the WrbA family. FMN is required as a cofactor.

The catalysed reaction is a quinone + NADH + H(+) = a quinol + NAD(+). The enzyme catalyses a quinone + NADPH + H(+) = a quinol + NADP(+). This is NAD(P)H dehydrogenase (quinone) 1 from Rhizobium meliloti (strain 1021) (Ensifer meliloti).